The chain runs to 146 residues: Small ribosomal subunit protein uS15 (146 aa).

The protein belongs to the universal ribosomal protein uS15 family. In terms of assembly, part of the 30S ribosomal subunit.

This is Small ribosomal subunit protein uS15 from Picrophilus torridus (strain ATCC 700027 / DSM 9790 / JCM 10055 / NBRC 100828 / KAW 2/3).